The following is a 236-amino-acid chain: Uridylate kinase (236 aa).

10-13 lines the ATP pocket; the sequence is KLSG. Residue Gly52 participates in UMP binding. ATP-binding residues include Gly53 and Arg57. UMP contacts are provided by residues Asp72 and 133-140; that span reads TGNPFFTT. ATP is bound by residues Thr160, Tyr166, and Asp169.

The protein belongs to the UMP kinase family. In terms of assembly, homohexamer.

The protein resides in the cytoplasm. It carries out the reaction UMP + ATP = UDP + ADP. The protein operates within pyrimidine metabolism; CTP biosynthesis via de novo pathway; UDP from UMP (UMPK route): step 1/1. Inhibited by UTP. Its function is as follows. Catalyzes the reversible phosphorylation of UMP to UDP. This Cupriavidus necator (strain ATCC 17699 / DSM 428 / KCTC 22496 / NCIMB 10442 / H16 / Stanier 337) (Ralstonia eutropha) protein is Uridylate kinase.